Reading from the N-terminus, the 343-residue chain is Ferrochelatase (343 aa).

Positions 191 and 270 each coordinate Fe cation.

Belongs to the ferrochelatase family.

Its subcellular location is the cytoplasm. The catalysed reaction is heme b + 2 H(+) = protoporphyrin IX + Fe(2+). It participates in porphyrin-containing compound metabolism; protoheme biosynthesis; protoheme from protoporphyrin-IX: step 1/1. Its function is as follows. Catalyzes the ferrous insertion into protoporphyrin IX. This Phenylobacterium zucineum (strain HLK1) protein is Ferrochelatase.